The following is a 188-amino-acid chain: Peptidyl-tRNA hydrolase (188 aa).

Tyr-14 serves as a coordination point for tRNA. His-19 functions as the Proton acceptor in the catalytic mechanism. 3 residues coordinate tRNA: Tyr-64, Asn-66, and Asn-112.

It belongs to the PTH family. As to quaternary structure, monomer.

The protein resides in the cytoplasm. The catalysed reaction is an N-acyl-L-alpha-aminoacyl-tRNA + H2O = an N-acyl-L-amino acid + a tRNA + H(+). Hydrolyzes ribosome-free peptidyl-tRNAs (with 1 or more amino acids incorporated), which drop off the ribosome during protein synthesis, or as a result of ribosome stalling. Its function is as follows. Catalyzes the release of premature peptidyl moieties from peptidyl-tRNA molecules trapped in stalled 50S ribosomal subunits, and thus maintains levels of free tRNAs and 50S ribosomes. This chain is Peptidyl-tRNA hydrolase, found in Clostridium tetani (strain Massachusetts / E88).